The sequence spans 375 residues: MSTAGKVIKCRAAVLWEKNKPFSIEEVEVVPPKAYEVRIKIVATGICRSDDHVVNGSIITPLPAILGHEAGGIVESIGEGVTTVKPGDKVIPLFVPQCGKCRACKHPESNLCTHGDLGRAQGTLMDGTSRFTCKGKPIHHFLGVTTFSEYTVVSEISVTKIDAASPLEKVCLIGCGFSTGYGSAVKVGKVARGSICSCVWSGRVGLSAIIGCKAAGAARIIAVDINKDKFAKAKELGATECVNPQDYDKPIYQVLQEMTDGGVDFSFEVIGRLDTMVSALMCCQESHGVSVIVGVPPNAQSLTMDPMVLLSGRSWKGAVFGGYKGKDDVPKLVADFMAKKFPLEPLITNVFPFAKINEGFDLLRAGKSIRTVLTF.

Serine 2 is modified (N-acetylserine). Zn(2+) is bound by residues cysteine 47, histidine 68, cysteine 98, cysteine 101, cysteine 104, cysteine 112, and cysteine 175. NAD(+) is bound by residues 200–205 (WSGRVG), aspartate 224, and lysine 229. Lysine 234 bears the N6-succinyllysine mark. An NAD(+)-binding site is contributed by 293-295 (VGV). Lysine 340 is subject to N6-succinyllysine. Residue arginine 370 participates in NAD(+) binding.

This sequence belongs to the zinc-containing alcohol dehydrogenase family. Class-I subfamily. In terms of assembly, homodimer. Zn(2+) serves as cofactor.

Its subcellular location is the cytoplasm. It catalyses the reaction a primary alcohol + NAD(+) = an aldehyde + NADH + H(+). The catalysed reaction is a secondary alcohol + NAD(+) = a ketone + NADH + H(+). This is Alcohol dehydrogenase 1 (ADH1) from Geomys knoxjonesi (Jones' pocket gopher).